Here is a 387-residue protein sequence, read N- to C-terminus: UDP-N-acetylglucosamine--N-acetylmuramyl-(pentapeptide) pyrophosphoryl-undecaprenol N-acetylglucosamine transferase (387 aa).

Residues T26 to G28, N137, R177, S205, and Q306 contribute to the UDP-N-acetyl-alpha-D-glucosamine site.

The protein belongs to the glycosyltransferase 28 family. MurG subfamily.

The protein resides in the cell inner membrane. It catalyses the reaction di-trans,octa-cis-undecaprenyl diphospho-N-acetyl-alpha-D-muramoyl-L-alanyl-D-glutamyl-meso-2,6-diaminopimeloyl-D-alanyl-D-alanine + UDP-N-acetyl-alpha-D-glucosamine = di-trans,octa-cis-undecaprenyl diphospho-[N-acetyl-alpha-D-glucosaminyl-(1-&gt;4)]-N-acetyl-alpha-D-muramoyl-L-alanyl-D-glutamyl-meso-2,6-diaminopimeloyl-D-alanyl-D-alanine + UDP + H(+). It participates in cell wall biogenesis; peptidoglycan biosynthesis. Its function is as follows. Cell wall formation. Catalyzes the transfer of a GlcNAc subunit on undecaprenyl-pyrophosphoryl-MurNAc-pentapeptide (lipid intermediate I) to form undecaprenyl-pyrophosphoryl-MurNAc-(pentapeptide)GlcNAc (lipid intermediate II). The sequence is that of UDP-N-acetylglucosamine--N-acetylmuramyl-(pentapeptide) pyrophosphoryl-undecaprenol N-acetylglucosamine transferase from Rhodospirillum rubrum (strain ATCC 11170 / ATH 1.1.1 / DSM 467 / LMG 4362 / NCIMB 8255 / S1).